We begin with the raw amino-acid sequence, 330 residues long: Phenylalanine--tRNA ligase alpha subunit (330 aa).

Residue Glu-254 participates in Mg(2+) binding.

It belongs to the class-II aminoacyl-tRNA synthetase family. Phe-tRNA synthetase alpha subunit type 1 subfamily. As to quaternary structure, tetramer of two alpha and two beta subunits. Requires Mg(2+) as cofactor.

It localises to the cytoplasm. It carries out the reaction tRNA(Phe) + L-phenylalanine + ATP = L-phenylalanyl-tRNA(Phe) + AMP + diphosphate + H(+). In Neisseria meningitidis serogroup A / serotype 4A (strain DSM 15465 / Z2491), this protein is Phenylalanine--tRNA ligase alpha subunit (pheS).